Here is a 274-residue protein sequence, read N- to C-terminus: Subtilisin DY (274 aa).

Residue Gln2 coordinates Ca(2+). A Peptidase S8 domain is found at 5–273 (PYGIPLIKAD…KGLINVEAAA (269 aa)). Asp32 (charge relay system) is an active-site residue. Asp41 is a Ca(2+) binding site. The active-site Charge relay system is His63. Ca(2+) contacts are provided by Leu74, Asn76, Val80, Ala168, Tyr170, and Val173. Catalysis depends on Ser220, which acts as the Charge relay system.

The protein belongs to the peptidase S8 family. Ca(2+) is required as a cofactor.

The protein localises to the secreted. It carries out the reaction Hydrolysis of proteins with broad specificity for peptide bonds, and a preference for a large uncharged residue in P1. Hydrolyzes peptide amides.. In terms of biological role, subtilisin is an extracellular alkaline serine protease, it catalyzes the hydrolysis of proteins and peptide amides. The sequence is that of Subtilisin DY (apr) from Bacillus licheniformis.